A 542-amino-acid polypeptide reads, in one-letter code: Phosphoacetylglucosamine mutase (542 aa).

The residue at position 1 (Met-1) is an N-acetylmethionine. The residue at position 62 (Thr-62) is a Phosphothreonine. Ser-64 functions as the Phosphoserine intermediate in the catalytic mechanism. The Mg(2+) site is built by Ser-64, Asp-276, Asp-278, and Asp-280. Ser-64 is modified (phosphoserine). Residues 370–372, 496–500, and Arg-505 contribute to the substrate site; these read EAN and RPSGT.

It belongs to the phosphohexose mutase family. Mg(2+) serves as cofactor. Found in many tissues except lung. Relatively high expression in pancreas, heart, liver, and placenta, and relatively low expression in brain, skeletal muscle and kidney.

The enzyme catalyses N-acetyl-alpha-D-glucosamine 1-phosphate = N-acetyl-D-glucosamine 6-phosphate. It participates in nucleotide-sugar biosynthesis; UDP-N-acetyl-alpha-D-glucosamine biosynthesis; N-acetyl-alpha-D-glucosamine 1-phosphate from alpha-D-glucosamine 6-phosphate (route I): step 2/2. Catalyzes the conversion of GlcNAc-6-P into GlcNAc-1-P during the synthesis of uridine diphosphate/UDP-GlcNAc, a sugar nucleotide critical to multiple glycosylation pathways including protein N- and O-glycosylation. The chain is Phosphoacetylglucosamine mutase from Homo sapiens (Human).